We begin with the raw amino-acid sequence, 187 residues long: MAIGMSELKKGLKIELGGVPYRIVEYQHVKPGKGAAFVRAKIKSFLDGKVIEKTFHAGDKCEEPNLVEKTMQYLYHDGDAYQFMDIESYEQIALSDSQVGEASKWMLDGMQVQVLLYNDKAISVDVPQVVALKIVETAPNFKGDTSSASKKPATLETGAVVQVPFHVLEGEIIKVNTETEEYLEKVK.

The protein belongs to the elongation factor P family.

It is found in the cytoplasm. Its pathway is protein biosynthesis; polypeptide chain elongation. Its function is as follows. Involved in peptide bond synthesis. Stimulates efficient translation and peptide-bond synthesis on native or reconstituted 70S ribosomes in vitro. Probably functions indirectly by altering the affinity of the ribosome for aminoacyl-tRNA, thus increasing their reactivity as acceptors for peptidyl transferase. The chain is Elongation factor P from Helicobacter acinonychis (strain Sheeba).